The sequence spans 510 residues: Pheromone-processing carboxypeptidase kex1 (510 aa).

The signal sequence occupies residues 1–21 (MISKLLKIVLLTAGVIGNTLA). Residues 22 to 468 (DSRIHEQYLV…SPDLGNGNYK (447 aa)) lie on the Lumenal side of the membrane. N-linked (GlcNAc...) asparagine glycosylation is found at N51 and N104. Catalysis depends on residues S175 and D367. Residues N392 and N416 are each glycosylated (N-linked (GlcNAc...) asparagine). The active site involves H427. A helical transmembrane segment spans residues 469-489 (WLYLGLIPVALTIIILFSIYL). Residues 490–510 (CRRFGLFGLSKQRYQPISPTP) are Cytoplasmic-facing.

Belongs to the peptidase S10 family.

It localises to the golgi apparatus. It is found in the trans-Golgi network membrane. The protein localises to the vacuole membrane. It carries out the reaction Preferential release of a C-terminal arginine or lysine residue.. Functionally, protease with a carboxypeptidase B-like function involved in the C-terminal processing of the lysine and arginine residues from protein precursors. Promotes cell fusion and is involved in the programmed cell death. This is Pheromone-processing carboxypeptidase kex1 (kex1) from Schizosaccharomyces pombe (strain 972 / ATCC 24843) (Fission yeast).